The chain runs to 963 residues: Importin-13 (963 aa).

HEAT repeat units lie at residues 24–54 (ESVE…QAQV), 56–88 (PQAW…KTSR), 95–135 (TDQY…LSMM), 142–179 (AVAD…EFQT), 194–231 (LAVE…SWVQ), 236–268 (LQDC…NAIS), 276–325 (VNTL…ALLD), 330–372 (WQSF…DDIL), 375–438 (EAEK…YEML), 440–476 (AELL…FQSI), 487–522 (VVPG…WLAD), 524–558 (PVMI…CREC), 562–600 (LPPY…LLSA), 603–648 (VEEI…SNLF), 676–716 (PVVV…VKTL), 720–754 (FAPM…VHIF), 761–803 (FPPI…ALKR), 815–845 (VKAV…TELL), 860–893 (EDGR…FALN), and 897–931 (FSLL…QQIL). Positions 45–111 (AQKWLMQAQV…KAQLFTQITR (67 aa)) constitute an Importin N-terminal domain.

It belongs to the importin beta family. Interacts with UBC9, RAN, RBM8A, eIF-1A and PAX6.

It is found in the cytoplasm. It localises to the nucleus. Its function is as follows. Functions in nuclear protein import as nuclear transport receptor. Serves as receptor for nuclear localization signals (NLS) in cargo substrates. Is thought to mediate docking of the importin/substrate complex to the nuclear pore complex (NPC) through binding to nucleoporin and the complex is subsequently translocated through the pore by an energy requiring, Ran-dependent mechanism. At the nucleoplasmic side of the NPC, Ran binds to the importin, the importin/substrate complex dissociates and importin is re-exported from the nucleus to the cytoplasm where GTP hydrolysis releases Ran. The directionality of nuclear import is thought to be conferred by an asymmetric distribution of the GTP- and GDP-bound forms of Ran between the cytoplasm and nucleus. Mediates the nuclear import of UBC9, the RBM8A/MAGOH complex, PAX6 and probably other members of the paired homeobox family. Also mediates nuclear export of eIF-1A, and the cytoplasmic release of eIF-1A is triggered by the loading of import substrates onto IPO13. The chain is Importin-13 (IPO13) from Pongo abelii (Sumatran orangutan).